Consider the following 625-residue polypeptide: Coagulation factor XI (625 aa).

Residues 1-18 form the signal peptide; sequence MIFLYQVVHFILFTSVSG. Apple domains lie at 20–103, 110–193, 200–283, and 291–374; these read CVTQ…FKQC, CNKD…LKSC, CIRD…LQSC, and CHSS…LRLC. Disulfide bonds link Cys20–Cys103, Cys46–Cys76, Cys50–Cys56, Cys110–Cys193, Cys136–Cys165, Cys140–Cys146, Cys200–Cys283, Cys226–Cys255, Cys230–Cys236, Cys291–Cys374, Cys317–Cys346, Cys321–Cys327, Cys380–Cys500, Cys416–Cys432, Cys514–Cys581, Cys545–Cys560, and Cys571–Cys599. N-linked (GlcNAc...) (complex) asparagine glycosylation is found at Asn90 and Asn126. The N-linked (GlcNAc...) (complex) asparagine; atypical glycan is linked to Asn163. The 236-residue stretch at 388 to 623 folds into the Peptidase S1 domain; the sequence is IVGGTASVRG…YVDWILEKTQ (236 aa). His431 (charge relay system) is an active-site residue. Residue Asn450 is glycosylated (N-linked (GlcNAc...) (complex) asparagine). Asp480 functions as the Charge relay system in the catalytic mechanism. Asn491 carries N-linked (GlcNAc...) (complex) asparagine glycosylation. 547 to 550 is a binding site for heparin; that stretch reads KRYR. The active-site Charge relay system is Ser575.

This sequence belongs to the peptidase S1 family. Plasma kallikrein subfamily. Homodimer; disulfide-linked. Can form non-covalently bonded homodimers. After activation the heavy and light chains are also linked by a disulfide bond. Interacts (activated) with F9 (inactive and activated) in calcium-dependent manner. Forms a heterodimer with SERPINA5. Interacts with Anopheles gambiae D7L2. Interacts (activated) with guianensin, an anticoagulant protein from Simulium guianense saliva. Post-translationally, N-glycosylated on both chains. N-glycosylated sites mainly consist of nonfucosylated sialylated biantennary (in high abundance) and/or triantennary (in low abundance) complex structures. Glycosylation at Asn-163 uses a rare non-canonical Asn-X-Cys glycosite. In terms of processing, activated by factor XIIa (or XII), which cleaves each polypeptide after Arg-387 into the light chain, which contains the active site, and the heavy chain, which associates with high molecular weight (HMW) kininogen. Activated by F12 (activated); the presence of negatively charged surfaces accelerates activation. Activated by F2 (thrombin); the presence of negatively charged surfaces, such as polyphosphate and dextran sulfate, strongly accelerates activation. Autoactivated; the presence of negatively charged surfaces, such as polyphosphate and dextran sulfate, accelerates autoactivation and autolysis. In terms of tissue distribution, isoform 2 is produced by platelets and megakaryocytes but absent from other blood cells.

Its subcellular location is the secreted. It carries out the reaction Selective cleavage of Arg-|-Ala and Arg-|-Val bonds in factor IX to form factor IXa.. With respect to regulation, inhibited by SERPINA5. Factor XI triggers the middle phase of the intrinsic pathway of blood coagulation by activating factor IX. This chain is Coagulation factor XI (F11), found in Homo sapiens (Human).